We begin with the raw amino-acid sequence, 58 residues long: Large ribosomal subunit protein uL30 (58 aa).

This sequence belongs to the universal ribosomal protein uL30 family. Part of the 50S ribosomal subunit.

The protein is Large ribosomal subunit protein uL30 of Erythrobacter litoralis (strain HTCC2594).